The sequence spans 309 residues: Porphobilinogen deaminase (309 aa).

At cysteine 244 the chain carries S-(dipyrrolylmethanemethyl)cysteine.

It belongs to the HMBS family. Monomer. Dipyrromethane serves as cofactor.

The catalysed reaction is 4 porphobilinogen + H2O = hydroxymethylbilane + 4 NH4(+). It participates in porphyrin-containing compound metabolism; protoporphyrin-IX biosynthesis; coproporphyrinogen-III from 5-aminolevulinate: step 2/4. Functionally, tetrapolymerization of the monopyrrole PBG into the hydroxymethylbilane pre-uroporphyrinogen in several discrete steps. The chain is Porphobilinogen deaminase from Listeria monocytogenes serotype 4a (strain HCC23).